Here is an 83-residue protein sequence, read N- to C-terminus: Short neurotoxin II (83 aa).

The first 21 residues, 1-21 (MKTLLLTLVVVTVVCLDLGYT), serve as a signal peptide directing secretion. Cystine bridges form between Cys-24-Cys-45, Cys-38-Cys-62, Cys-64-Cys-75, and Cys-76-Cys-81.

The protein belongs to the three-finger toxin family. Short-chain subfamily. Type I alpha-neurotoxin sub-subfamily. In terms of tissue distribution, expressed by the venom gland.

The protein resides in the secreted. Functionally, binds to muscle nicotinic acetylcholine receptor (nAChR) and inhibit acetylcholine from binding to the receptor, thereby impairing neuromuscular transmission. The sequence is that of Short neurotoxin II from Laticauda colubrina (Yellow-lipped sea krait).